The chain runs to 152 residues: MTHIIIDGDACPVVDSIIDLTTETGIFVTIIRSFSHFSNQLYPPHVSTLYVDDGPDAVDYKIVQLSTKDDIVVTQDYGLASLLVDKVLIVMHHNGKIYNSKNIQQLLDKRYMNAQIRKQGGRHKGPPPFTKQDQKVFEQSLLKVIHRIKELD.

The protein belongs to the UPF0178 family.

The polypeptide is UPF0178 protein SAS0646 (Staphylococcus aureus (strain MSSA476)).